The following is a 439-amino-acid chain: Glutamine synthetase (439 aa).

Residues Ser12–Lys93 form the GS beta-grasp domain. One can recognise a GS catalytic domain in the interval Pro99–Leu439. Mg(2+) contacts are provided by Glu122 and Glu124. Glu172 provides a ligand contact to ATP. Positions 177 and 184 each coordinate Mg(2+). Gly229 is an L-glutamate binding site. His233 contacts Mg(2+). ATP is bound by residues His235 to Ser237 and Ser237. The L-glutamate site is built by Arg283, Glu289, and Arg301. Residues Arg301, Arg306, and Lys313 each coordinate ATP. Glu318 contributes to the Mg(2+) binding site. Arg320 provides a ligand contact to L-glutamate.

This sequence belongs to the glutamine synthetase family. In terms of assembly, oligomer of 12 subunits arranged in the form of two hexagons. Requires Mg(2+) as cofactor.

It is found in the cytoplasm. It carries out the reaction L-glutamate + NH4(+) + ATP = L-glutamine + ADP + phosphate + H(+). Functionally, probably involved in nitrogen metabolism via ammonium assimilation. Catalyzes the ATP-dependent biosynthesis of glutamine from glutamate and ammonia. The polypeptide is Glutamine synthetase (Pyrococcus woesei).